The primary structure comprises 428 residues: Histidinol dehydrogenase (428 aa).

NAD(+) is bound by residues Tyr126, Gln188, and Asn211. Substrate-binding residues include Ser234, Gln256, and His259. Zn(2+)-binding residues include Gln256 and His259. Residues Glu324 and His325 each act as proton acceptor in the active site. Residues His325, Asp358, Glu412, and His417 each coordinate substrate. Zn(2+) is bound at residue Asp358. His417 lines the Zn(2+) pocket.

This sequence belongs to the histidinol dehydrogenase family. Zn(2+) is required as a cofactor.

It catalyses the reaction L-histidinol + 2 NAD(+) + H2O = L-histidine + 2 NADH + 3 H(+). The protein operates within amino-acid biosynthesis; L-histidine biosynthesis; L-histidine from 5-phospho-alpha-D-ribose 1-diphosphate: step 9/9. Functionally, catalyzes the sequential NAD-dependent oxidations of L-histidinol to L-histidinaldehyde and then to L-histidine. The polypeptide is Histidinol dehydrogenase (Chlorobaculum tepidum (strain ATCC 49652 / DSM 12025 / NBRC 103806 / TLS) (Chlorobium tepidum)).